We begin with the raw amino-acid sequence, 619 residues long: Chaperone protein HscA homolog (619 aa).

The protein belongs to the heat shock protein 70 family.

Its function is as follows. Chaperone involved in the maturation of iron-sulfur cluster-containing proteins. Has a low intrinsic ATPase activity which is markedly stimulated by HscB. This is Chaperone protein HscA homolog from Acinetobacter baumannii (strain AB0057).